The sequence spans 141 residues: MAKKIAGYVKLQIPAGKATPAPPVGPALGQHGVNIMGFCKEFNERTAKDAGLVIPVVITVYADRSFSFITKTPPAAVLLKKACKIESGSGKPNKDKVAKITMDEVRKIAEQKMPDLNAASVDAATKMIAGTARSMGIVVVE.

This sequence belongs to the universal ribosomal protein uL11 family. In terms of assembly, part of the ribosomal stalk of the 50S ribosomal subunit. Interacts with L10 and the large rRNA to form the base of the stalk. L10 forms an elongated spine to which L12 dimers bind in a sequential fashion forming a multimeric L10(L12)X complex. Post-translationally, one or more lysine residues are methylated.

Its function is as follows. Forms part of the ribosomal stalk which helps the ribosome interact with GTP-bound translation factors. The sequence is that of Large ribosomal subunit protein uL11 from Ruminiclostridium cellulolyticum (strain ATCC 35319 / DSM 5812 / JCM 6584 / H10) (Clostridium cellulolyticum).